The sequence spans 615 residues: Sodium-dependent neutral amino acid transporter B(0)AT3 (615 aa).

Topologically, residues 1-26 (MAQASGMDPLVDIEDERPKWDNKLQY) are cytoplasmic. Residues 27 to 47 (LLSCIGFAVGLGNIWRFPYLC) form a helical membrane-spanning segment. Topologically, residues 48 to 52 (HTHGG) are extracellular. Residues 53–73 (GAFLIPYFIALVFEGIPLFYI) traverse the membrane as a helical segment. At 74-105 (ELAIGQRLRRGSIGVWKTISPYLGGVGLGCFS) the chain is on the cytoplasmic side. Residues 106–126 (VSFLVSLYYNTILLWVLWFFL) form a helical membrane-spanning segment. At 127-177 (NSFQHPLPWSTCPLDLNRTGFVQECQSSGTVSYFWYRQTLNITSDISNTGT) the chain is on the extracellular side. Asn-143 and Asn-167 each carry an N-linked (GlcNAc...) asparagine glycan. The chain crosses the membrane as a helical span at residues 178–198 (IQWKLFLCLVACWTTVYLCVI). The Cytoplasmic portion of the chain corresponds to 199–206 (RGIESTGK). A helical membrane pass occupies residues 207 to 227 (VIYFTALFPYLVLTIFLIRGL). Over 228-255 (TLPGATEGLTYLFTPNMKILQNSRVWLD) the chain is Extracellular. The helical transmembrane segment at 256–276 (AATQIFFSLSLAFGGHIAFAS) threads the bilayer. The Cytoplasmic segment spans residues 277–290 (YNQPRNNCEKDAVT). A helical transmembrane segment spans residues 291 to 311 (IALVNSMTSLYASITIFSIMG). The Extracellular portion of the chain corresponds to 312–397 (FKASNDYGRC…FTEAVLHMPG (86 aa)). Asn-353 carries an N-linked (GlcNAc...) asparagine glycan. A helical membrane pass occupies residues 398–418 (ASVWSVLFFGMLFTLGLSSMF). At 419–442 (GNMEGVITPLFDMGILPKGVPKET) the chain is on the cytoplasmic side. Residues 443-463 (MTGVVCFICFLSAICFTLQSG) form a helical membrane-spanning segment. The Extracellular portion of the chain corresponds to 464–472 (SYWLEIFDS). Residues 473–493 (FAASLNLIIFAFMEVVGVIHV) form a helical membrane-spanning segment. At 494 to 520 (YGIKRFCDDIEWMTGRRPSLYWQVTWR) the chain is on the cytoplasmic side. The helical transmembrane segment at 521–541 (VVSPMLLFGIFLSYIVLLAQS) threads the bilayer. The Extracellular portion of the chain corresponds to 542–571 (SPSYKAWNPQYEHFPSREEKLYPGWVQVTC). Residues 572–592 (VLLSFLPSLWVPGIALAQLLF) traverse the membrane as a helical segment. At 593–615 (QYRQRWKNTHLESALKPQESRGC) the chain is on the cytoplasmic side.

The protein belongs to the sodium:neurotransmitter symporter (SNF) (TC 2.A.22) family. SLC6A18 subfamily. Interacts with CLTRN; this interaction regulates the trafficking of SLC6A18 to the cell membrane and its activity. As to expression, kidney-specific expression.

It localises to the apical cell membrane. The protein resides in the cell membrane. It catalyses the reaction L-alanine(out) + chloride(out) + 2 Na(+)(out) = L-alanine(in) + chloride(in) + 2 Na(+)(in). The catalysed reaction is glycine(out) + chloride(out) + 2 Na(+)(out) = glycine(in) + chloride(in) + 2 Na(+)(in). The enzyme catalyses L-methionine(out) + chloride(out) + 2 Na(+)(out) = L-methionine(in) + chloride(in) + 2 Na(+)(in). It carries out the reaction L-valine(out) + chloride(out) + 2 Na(+)(out) = L-valine(in) + chloride(in) + 2 Na(+)(in). It catalyses the reaction L-isoleucine(out) + chloride(out) + 2 Na(+)(out) = L-isoleucine(in) + chloride(in) + 2 Na(+)(in). The catalysed reaction is L-serine(out) + chloride(out) + 2 Na(+)(out) = L-serine(in) + chloride(in) + 2 Na(+)(in). The enzyme catalyses L-leucine(out) + chloride(out) + 2 Na(+)(out) = L-leucine(in) + chloride(in) + 2 Na(+)(in). Symporter that transports one amino acid molecule together with two sodium and one chloride ions in kidneys and plays a role in the neutral amino acids reabsorption. Preferentially transports neutral amino acids such as L-glycine and L-alanine but also other neutral amino acids. Required CLTRN for cell surface expression and for its amino acid transporter activity. The transport mechanism is pH-independent. This is Sodium-dependent neutral amino acid transporter B(0)AT3 from Rattus norvegicus (Rat).